The following is a 110-amino-acid chain: Large ribosomal subunit protein uL22 (110 aa).

This sequence belongs to the universal ribosomal protein uL22 family. As to quaternary structure, part of the 50S ribosomal subunit.

This protein binds specifically to 23S rRNA; its binding is stimulated by other ribosomal proteins, e.g. L4, L17, and L20. It is important during the early stages of 50S assembly. It makes multiple contacts with different domains of the 23S rRNA in the assembled 50S subunit and ribosome. Its function is as follows. The globular domain of the protein is located near the polypeptide exit tunnel on the outside of the subunit, while an extended beta-hairpin is found that lines the wall of the exit tunnel in the center of the 70S ribosome. The chain is Large ribosomal subunit protein uL22 from Janthinobacterium sp. (strain Marseille) (Minibacterium massiliensis).